The chain runs to 292 residues: MSAFIATIPRPSLAERFADLAVGALIDEAELSPKPALVDRRGSGAHRDLDLKLMHASARALWPAFHAMAEAARSLAELDRPLRETIGRLGREGEARMLAVTGGVNTHRGAIWALGLLVTAAALEPQRLAPEQVSLRAARLARLEDRQMPAQPPSHGERVRQRYGVRGAREEARGGFPGVIRHGLPQLRRSRAAGCDENHARLDALLAIMAQLEDTCVLHRAGLEGLRCMQDGARAVLVAGGSASLAGRRSLRDLELGLLELNASPGGAADLLAVTLFLDRLEPMLGAPIGSL.

The protein belongs to the CitG/MdcB family.

It carries out the reaction 3'-dephospho-CoA + ATP = 2'-(5''-triphospho-alpha-D-ribosyl)-3'-dephospho-CoA + adenine. Functionally, involved in the formation of 2-(5''-phosphoribosyl)-3'-dephosphocoenzyme-A, the prosthetic group of the acyl-carrier protein of the malonate decarboxylase. The sequence is that of Probable 2-(5''-triphosphoribosyl)-3'-dephosphocoenzyme-A synthase from Azotobacter vinelandii (strain DJ / ATCC BAA-1303).